Consider the following 165-residue polypeptide: GTPase activating protein 1 (165 aa).

Residues 1 to 105 form the C2 domain; sequence MLGHLVGLVK…VVKMKIEGVA (105 aa). Positions 22, 23, 28, 74, 75, 76, and 81 each coordinate Ca(2+).

Belongs to the plant CAR protein family. In terms of assembly, binds to PYR/PYL/RCAR abscisic acid intracellular receptors in an ABA-independent manner, both at the plasma membrane and in the nucleus. Binds phospholipids in a Ca(2+)-dependent manner. Interacts with YchF1.

It localises to the cell membrane. It is found in the nucleus. The protein localises to the cytoplasm. The protein resides in the cytosol. In terms of biological role, mediates the transient calcium-dependent interaction of PYR/PYL/RCAR abscisic acid (ABA) receptors with the plasma membrane and thus regulates ABA sensitivity. Stimulates the GTPase/ATPase activities of YchF1, and regulates its subcellular localization. Promotes tolerance towards salinity stress by limiting the accumulation of reactive oxygen species (ROS). Promotes resistance to bacterial pathogens. In Oryza sativa subsp. indica (Rice), this protein is GTPase activating protein 1.